The primary structure comprises 459 residues: Sulfite oxidase (459 aa).

Residues 4 to 83 enclose the Cytochrome b5 heme-binding domain; sequence YPRYTREEVG…LQQYKVGELS (80 aa). Heme b is bound by residues histidine 40, histidine 65, and histidine 69. Positions 83–115 are disordered; it reads SPDEAPAAPDAQDPFAGDPPRHPGLRVNSQKPF. Positions 85-100 are enriched in low complexity; it reads DEAPAAPDAQDPFAGD. The segment at 86–95 is hinge; sequence EAPAAPDAQD. A moco domain region spans residues 96–323; sequence PFAGDPPRHP…PSRWQQNDYK (228 aa). Mo-molybdopterin is bound by residues 136–140, cysteine 185, aspartate 244, histidine 283, arginine 288, and 299–301; these read FTRNH and SVK. Residues 324–459 form a homodimerization region; sequence GFSPCVDWDT…RGVLSTAWHR (136 aa).

Homodimer. The cofactor is heme b. Mo-molybdopterin serves as cofactor.

It is found in the mitochondrion intermembrane space. It catalyses the reaction sulfite + O2 + H2O = sulfate + H2O2. It participates in energy metabolism; sulfur metabolism. Functionally, catalyzes the oxidation of sulfite to sulfate, the terminal reaction in the oxidative degradation of sulfur-containing amino acids. This Gallus gallus (Chicken) protein is Sulfite oxidase (SUOX).